The sequence spans 567 residues: 2-succinyl-5-enolpyruvyl-6-hydroxy-3-cyclohexene-1-carboxylate synthase (567 aa).

Belongs to the TPP enzyme family. MenD subfamily. Homodimer. It depends on Mg(2+) as a cofactor. The cofactor is Mn(2+). Requires thiamine diphosphate as cofactor.

It carries out the reaction isochorismate + 2-oxoglutarate + H(+) = 5-enolpyruvoyl-6-hydroxy-2-succinyl-cyclohex-3-ene-1-carboxylate + CO2. It functions in the pathway quinol/quinone metabolism; 1,4-dihydroxy-2-naphthoate biosynthesis; 1,4-dihydroxy-2-naphthoate from chorismate: step 2/7. It participates in quinol/quinone metabolism; menaquinone biosynthesis. Its function is as follows. Catalyzes the thiamine diphosphate-dependent decarboxylation of 2-oxoglutarate and the subsequent addition of the resulting succinic semialdehyde-thiamine pyrophosphate anion to isochorismate to yield 2-succinyl-5-enolpyruvyl-6-hydroxy-3-cyclohexene-1-carboxylate (SEPHCHC). The chain is 2-succinyl-5-enolpyruvyl-6-hydroxy-3-cyclohexene-1-carboxylate synthase from Yersinia pseudotuberculosis serotype I (strain IP32953).